The following is a 317-amino-acid chain: Tumor necrosis factor ligand superfamily member 11 (317 aa).

Residues 1–16 (MRRASRDYTKYLRGSE) show a composition bias toward basic and acidic residues. Residues 1-43 (MRRASRDYTKYLRGSEEMGGGPGAPHEGPLHAPPPPAPHQPPA) are disordered. The Cytoplasmic portion of the chain corresponds to 1–47 (MRRASRDYTKYLRGSEEMGGGPGAPHEGPLHAPPPPAPHQPPAASRS). The segment covering 31-41 (HAPPPPAPHQP) has biased composition (pro residues). Residues 48 to 68 (MFVALLGLGLGQVVCSVALFF) traverse the membrane as a helical; Signal-anchor for type II membrane protein segment. Residues 69–317 (YFRAQMDPNR…FGAFKVRDID (249 aa)) lie on the Extracellular side of the membrane. The 150-residue stretch at 164–313 (PFAHLTINAT…DATYFGAFKV (150 aa)) folds into the THD domain. Asn171 and Asn198 each carry an N-linked (GlcNAc...) asparagine glycan.

It belongs to the tumor necrosis factor family. Homotrimer. Interacts with TNFRSF11B. Interacts with TNFRSF11A. Interacts with FBN1 (via N-terminal domain) in a Ca(+2)-dependent manner. Interacts with TNFAIP6 (via both Link and CUB domains). The soluble form of isoform 1 derives from the membrane form by proteolytic processing. The cleavage may be catalyzed by ADAM17. Highest in the peripheral lymph nodes, weak in spleen, peripheral blood Leukocytes, bone marrow, heart, placenta, skeletal muscle, stomach and thyroid.

It is found in the cell membrane. The protein resides in the cytoplasm. Its subcellular location is the secreted. Cytokine that binds to TNFRSF11B/OPG and to TNFRSF11A/RANK. Osteoclast differentiation and activation factor. Augments the ability of dendritic cells to stimulate naive T-cell proliferation. May be an important regulator of interactions between T-cells and dendritic cells and may play a role in the regulation of the T-cell-dependent immune response. May also play an important role in enhanced bone-resorption in humoral hypercalcemia of malignancy. Induces osteoclastogenesis by activating multiple signaling pathways in osteoclast precursor cells, chief among which is induction of long lasting oscillations in the intracellular concentration of Ca (2+) resulting in the activation of NFATC1, which translocates to the nucleus and induces osteoclast-specific gene transcription to allow differentiation of osteoclasts. During osteoclast differentiation, in a TMEM64 and ATP2A2-dependent manner induces activation of CREB1 and mitochondrial ROS generation necessary for proper osteoclast generation. The chain is Tumor necrosis factor ligand superfamily member 11 (TNFSF11) from Homo sapiens (Human).